Consider the following 199-residue polypeptide: Transgelin-2 (199 aa).

Ala2 carries the post-translational modification N-acetylalanine. Position 11 is a phosphoserine (Ser11). 2 positions are modified to N6-acetyllysine: Lys17 and Lys20. In terms of domain architecture, Calponin-homology (CH) spans 24 to 136 (ADLEQILIQW…RTLMNLGGLA (113 aa)). A Phosphoserine modification is found at Ser163. Lys171 participates in a covalent cross-link: Glycyl lysine isopeptide (Lys-Gly) (interchain with G-Cter in SUMO2). A Calponin-like repeat occupies 174–199 (IGLQMGTNRGASQAGMTGYGMPRQIL). Position 180 is a phosphothreonine (Thr180). Arg182 and Arg196 each carry omega-N-methylarginine.

The protein belongs to the calponin family.

This Bos taurus (Bovine) protein is Transgelin-2 (TAGLN2).